We begin with the raw amino-acid sequence, 302 residues long: Adipolin (302 aa).

An N-terminal signal peptide occupies residues 1–20 (MRRWAWAAVVVLLGPQLVLL). Disordered stretches follow at residues 28 to 68 (EAQR…GPEF) and 86 to 110 (ALRKRCGSRDKKPRDLFGPPGPPGA). N43 is a glycosylation site (N-linked (GlcNAc...) asparagine). The segment covering 86 to 100 (ALRKRCGSRDKKPRD) has biased composition (basic and acidic residues). Residues 147-302 (LRLVGEAFHC…SSFSGLLLGT (156 aa)) form the C1q domain.

Belongs to the adipolin/erythroferrone family. As to quaternary structure, homomultimer; disulfide-linked. May interact with ERFE. In terms of processing, processed into Adipolin fC1QTNF12 and Adipolin gC1QTNF12 by FURIN. Insulin enhances endogenous C1QTNF12 cleavage. In terms of tissue distribution, predominantly expressed by adipose tissues.

It localises to the secreted. Insulin-sensitizing adipocyte-secreted protein (adipokine) that regulates glucose metabolism in liver and adipose tissue. Promotes glucose uptake in adipocytes and suppresses de novo glucose production in hepatocytes via the PI3K-Akt signaling pathway. Administration lead to reduction of blood glucose. Able to attenuate inflammation in fat tissue. The protein is Adipolin of Homo sapiens (Human).